The chain runs to 166 residues: Bud site selection protein 20 (166 aa).

The Nuclear localization signal signature appears at 7 to 16; sequence KRYKTKRRTR. The segment at 17-31 is nuclear export signal-like (NES-like); the sequence is DLDLIYNDLSTKESV. The C2H2-type zinc finger occupies 49–73; it reads HYCIHCAKYMETAIALKTHLKGKVH.

It belongs to the ZNF593/BUD20 C2H2-type zinc-finger protein family. Associates with pre-60S ribosomal particles; released from the pre-60S particle very early in the cytoplasm.

It is found in the nucleus. The protein localises to the cytoplasm. Functionally, involved in pre-60S ribosomal particles maturation by promoting the nuclear export of the 60S ribosome. Involved in positioning the proximal bud pole signal. This Saccharomyces cerevisiae (strain ATCC 204508 / S288c) (Baker's yeast) protein is Bud site selection protein 20.